We begin with the raw amino-acid sequence, 49 residues long: Large ribosomal subunit protein bL33A (49 aa).

This sequence belongs to the bacterial ribosomal protein bL33 family.

The chain is Large ribosomal subunit protein bL33A from Levilactobacillus brevis (strain ATCC 367 / BCRC 12310 / CIP 105137 / JCM 1170 / LMG 11437 / NCIMB 947 / NCTC 947) (Lactobacillus brevis).